The chain runs to 152 residues: MESNIILVVILGISIVGKATSVAISVAALLILKLLGLDKYIFPYLNDKGMFWGLVLLTAAILIPIAQGNVKAIDIKNNLVSFVGITALVLSFLTTYLSGVGLRYLTVQGHSDVMPSLILGSVAAAAFLGGVPVGPLITSGILALLVKMVKKS.

A run of 4 helical transmembrane segments spans residues I5–S25, M50–V70, F82–L102, and L117–I137.

The protein belongs to the UPF0756 family.

It localises to the cell membrane. This chain is UPF0756 membrane protein CA_C0092, found in Clostridium acetobutylicum (strain ATCC 824 / DSM 792 / JCM 1419 / IAM 19013 / LMG 5710 / NBRC 13948 / NRRL B-527 / VKM B-1787 / 2291 / W).